The sequence spans 503 residues: Glutamate--tRNA ligase (503 aa).

The short motif at 12-22 (PSPTGYLHVGG) is the 'HIGH' region element. Positions 259 to 263 (KLSKR) match the 'KMSKS' region motif. Lysine 262 lines the ATP pocket.

This sequence belongs to the class-I aminoacyl-tRNA synthetase family. Glutamate--tRNA ligase type 1 subfamily. As to quaternary structure, monomer.

Its subcellular location is the cytoplasm. It carries out the reaction tRNA(Glu) + L-glutamate + ATP = L-glutamyl-tRNA(Glu) + AMP + diphosphate. Its function is as follows. Catalyzes the attachment of glutamate to tRNA(Glu) in a two-step reaction: glutamate is first activated by ATP to form Glu-AMP and then transferred to the acceptor end of tRNA(Glu). This chain is Glutamate--tRNA ligase, found in Chloroherpeton thalassium (strain ATCC 35110 / GB-78).